A 432-amino-acid polypeptide reads, in one-letter code: Trigger factor (432 aa).

Residues 161-246 (EDRVTIDFTG…LKKVEERELP (86 aa)) form the PPIase FKBP-type domain.

It belongs to the FKBP-type PPIase family. Tig subfamily. In terms of assembly, homodimer and monomer. In vivo most of the ribosomes are in complex with monomeric TF. Uncomplexed TF, however, is in a monomer-dimer equilibrium with approximately two thirds of TF existing in a dimeric state.

It localises to the cytoplasm. It catalyses the reaction [protein]-peptidylproline (omega=180) = [protein]-peptidylproline (omega=0). In terms of biological role, involved in protein export. Acts as a chaperone by maintaining the newly synthesized protein in an open conformation. Functions as a peptidyl-prolyl cis-trans isomerase. This is Trigger factor from Escherichia fergusonii (strain ATCC 35469 / DSM 13698 / CCUG 18766 / IAM 14443 / JCM 21226 / LMG 7866 / NBRC 102419 / NCTC 12128 / CDC 0568-73).